A 586-amino-acid polypeptide reads, in one-letter code: MTNALSWYVAAFVDGLVQAGVTEAVISPGSRSTPLAMAMAAHSGLHFSMHIDERSAAFFALGMVKAKQRPVALVCTSGTAAANYLPAIVEAYYSRVPLVVLTADRPHELRDVGAPQAIDQLHLYGRYAKWFVDLALPEETDPMLSYARTMAARAAAIAAGAPAGPVHVNVPLREPLVPTIDEAVWEKVRTVAETPQIMSGRATLPAENVAALYEQLAAAKRGLIVCGALDQPGFAEAVTELARTLDFPILADPLSQLRAGAHDKTYVIDSYDAILKDEAVASRLVPDVVLRFGAMPVSKPLFLWLKQHRSIRQIVVDDGGWRDPTLEAACFVRSDETVLCRQLLDIARPKQKESAWSTTWREMNDIARTVLRQHLPADEWFEGKVFTELAELLPAGATLFVGNSMPIRDADTFLFATDKPLRVLANRGANGIDGVVSSALGASLAASPLVLVIGDLSFYHDLNGLLAAKMHGLQATIVLMNNNGGGIFSFLPQARHEGPFETLFGTPTDLTFAHAVEMYGGRYAVPHTWGEFRHHVAESLNTGGLSVIEVRTSRTENVQMHRFLWERVSQEIAKFLEQKGTEEPWN.

Belongs to the TPP enzyme family. MenD subfamily. As to quaternary structure, homodimer. It depends on Mg(2+) as a cofactor. Mn(2+) serves as cofactor. Thiamine diphosphate is required as a cofactor.

The catalysed reaction is isochorismate + 2-oxoglutarate + H(+) = 5-enolpyruvoyl-6-hydroxy-2-succinyl-cyclohex-3-ene-1-carboxylate + CO2. It functions in the pathway quinol/quinone metabolism; 1,4-dihydroxy-2-naphthoate biosynthesis; 1,4-dihydroxy-2-naphthoate from chorismate: step 2/7. It participates in quinol/quinone metabolism; menaquinone biosynthesis. In terms of biological role, catalyzes the thiamine diphosphate-dependent decarboxylation of 2-oxoglutarate and the subsequent addition of the resulting succinic semialdehyde-thiamine pyrophosphate anion to isochorismate to yield 2-succinyl-5-enolpyruvyl-6-hydroxy-3-cyclohexene-1-carboxylate (SEPHCHC). This is 2-succinyl-5-enolpyruvyl-6-hydroxy-3-cyclohexene-1-carboxylate synthase from Geobacillus thermodenitrificans (strain NG80-2).